The primary structure comprises 572 residues: DBH-like monooxygenase protein 2 homolog (572 aa).

The N-terminal stretch at 1–26 (MGTCLKGNMSVLSLVLFLLSVQQFWA) is a signal peptide. N-linked (GlcNAc...) asparagine glycosylation is found at Asn-8, Asn-64, Asn-187, and Asn-203. At 27–552 (QEDPLLPFSE…SPPEPCVRAC (526 aa)) the chain is on the extracellular side. The DOMON domain occupies 42–157 (HNVQLKWGFD…LPMKLIYAYG (116 aa)). Residue Tyr-207 is part of the active site. Cystine bridges form between Cys-209-Cys-256 and Cys-244-Cys-263. Residues His-237 and His-238 each contribute to the Cu cation site. Position 301 (His-301) interacts with Cu cation. N-linked (GlcNAc...) asparagine glycosylation is present at Asn-306. Cystine bridges form between Cys-358–Cys-472 and Cys-435–Cys-457. Residue His-381 is part of the active site. Cu cation is bound by residues His-381, His-383, and Met-456. 4 N-linked (GlcNAc...) asparagine glycosylation sites follow: Asn-468, Asn-503, Asn-518, and Asn-534. The chain crosses the membrane as a helical span at residues 553 to 571 (ATKNLAFMSLFLCLAGMWA). A topological domain (cytoplasmic) is located at residue Ser-572.

It belongs to the copper type II ascorbate-dependent monooxygenase family. Cu(2+) serves as cofactor.

The protein resides in the membrane. The sequence is that of DBH-like monooxygenase protein 2 homolog (moxd2) from Danio rerio (Zebrafish).